The chain runs to 163 residues: MGFDINWGSALYQLLAFSVLLFFLSKFALKPLLGIMEKREQMINEQISSAEKNRKDSEAFIAEQRQALEQARMEANEIIQNAKKLSEQQGQDIVKAARNDAERIKESAVAEIQREKEQAVSALREQVAGLSVLIATKVIEKELNEAEQEKLVQEYLKEVGEEL.

A helical membrane pass occupies residues 10-29 (ALYQLLAFSVLLFFLSKFAL).

This sequence belongs to the ATPase B chain family. As to quaternary structure, F-type ATPases have 2 components, F(1) - the catalytic core - and F(0) - the membrane proton channel. F(1) has five subunits: alpha(3), beta(3), gamma(1), delta(1), epsilon(1). F(0) has three main subunits: a(1), b(2) and c(10-14). The alpha and beta chains form an alternating ring which encloses part of the gamma chain. F(1) is attached to F(0) by a central stalk formed by the gamma and epsilon chains, while a peripheral stalk is formed by the delta and b chains.

The protein resides in the cell membrane. In terms of biological role, f(1)F(0) ATP synthase produces ATP from ADP in the presence of a proton or sodium gradient. F-type ATPases consist of two structural domains, F(1) containing the extramembraneous catalytic core and F(0) containing the membrane proton channel, linked together by a central stalk and a peripheral stalk. During catalysis, ATP synthesis in the catalytic domain of F(1) is coupled via a rotary mechanism of the central stalk subunits to proton translocation. Its function is as follows. Component of the F(0) channel, it forms part of the peripheral stalk, linking F(1) to F(0). The polypeptide is ATP synthase subunit b (Alkalihalophilus pseudofirmus (strain ATCC BAA-2126 / JCM 17055 / OF4) (Bacillus pseudofirmus)).